The chain runs to 605 residues: Ras guanine nucleotide exchange factor A (605 aa).

The LisH domain occupies D67–T99. The N-terminal Ras-GEF domain maps to D198–S320. Residues D353–K597 enclose the Ras-GEF domain.

As to quaternary structure, component of the Sca1 complex composed of at least gefA, gefH, scaA, phr, and the protein phosphatase 2A subunits pppA and pho2B. Interacts directly with gefH.

It localises to the cell membrane. In terms of biological role, ras-bound GDP/GTP exchange factor required for normal activation of adenylyl cyclase. Component of the Sca1 complex, a regulator of cell motility, chemotaxis and signal relay. The Sca1 complex is recruited to the plasma membrane in a chemoattractant- and F-actin-dependent manner and is enriched at the leading edge of chemotaxing cells where it regulates F-actin dynamics and signal relay by controlling the activation of rasC and the downstream target of rapamycin complex 2 (TORC2)-Akt/protein kinase B (PKB) pathway. The chain is Ras guanine nucleotide exchange factor A (gefA) from Dictyostelium discoideum (Social amoeba).